The sequence spans 128 residues: Ribonuclease P protein component (128 aa).

Belongs to the RnpA family. As to quaternary structure, consists of a catalytic RNA component (M1 or rnpB) and a protein subunit.

The catalysed reaction is Endonucleolytic cleavage of RNA, removing 5'-extranucleotides from tRNA precursor.. Its function is as follows. RNaseP catalyzes the removal of the 5'-leader sequence from pre-tRNA to produce the mature 5'-terminus. It can also cleave other RNA substrates such as 4.5S RNA. The protein component plays an auxiliary but essential role in vivo by binding to the 5'-leader sequence and broadening the substrate specificity of the ribozyme. The polypeptide is Ribonuclease P protein component (Chromohalobacter salexigens (strain ATCC BAA-138 / DSM 3043 / CIP 106854 / NCIMB 13768 / 1H11)).